A 99-amino-acid polypeptide reads, in one-letter code: Cysteine-rich C-terminal protein 1 (99 aa).

2 disordered regions span residues 1 to 42 (MSSQ…CCGS) and 65 to 99 (RRRR…CSGC). Residues 22 to 32 (APCPAPAPTPA) are compositionally biased toward pro residues. The span at 83-99 (QRSQRSNNRSSGCCSGC) shows a compositional bias: low complexity.

This Homo sapiens (Human) protein is Cysteine-rich C-terminal protein 1 (CRCT1).